A 520-amino-acid chain; its full sequence is DDB1- and CUL4-associated factor 17 (520 aa).

Helical transmembrane passes span 186 to 206 (VLLY…ILEI) and 222 to 242 (GILI…QTIA).

Interacts with DDB1, CUL4A and CUL4B. Ubiquitously expressed.

The protein resides in the membrane. It is found in the nucleus. Its subcellular location is the nucleolus. Its pathway is protein modification; protein ubiquitination. Its function is as follows. May function as a substrate receptor for CUL4-DDB1 E3 ubiquitin-protein ligase complex. The chain is DDB1- and CUL4-associated factor 17 (DCAF17) from Homo sapiens (Human).